A 397-amino-acid chain; its full sequence is MTSVAELREQVRSLQDELAQLKGERGKTTTREKITKMSSEVVDSNPYSRLMALQRMGIVKEYEQIRQKSVAVVGVGGVGSVTADMLTRCGVGKLILFDYDKVELANMNRLFFTPDQAGLSKVEAAAKTLNYINPDVKIFTNNYNITTVESFEKFMNAIRTGGIDGSGAVDLVLSCVDNFEARMAINAACNELSLNWFESGVSENAVSGHIQFIQPGEKACFACAPPLVVAENIDEKTLKREGVCAASLPTTMGIVAGMLVQNTLKYLLKFGTVSDYLGYNALIDFFPKMGLKPNPTCDDRFCVLRQQEFAAKPKEETFEEVQQEEESPVHAENLYGIELVSETEVESAPTVPVATANTGLKLAFETPIQMEHSSAATDVIKNDDVSLDDLMAQMKAI.

Residues Gly77, Asp98, Lys121, Asn144, and Asn178 each contribute to the ATP site. Residues Cys220 and Cys223 each coordinate Zn(2+). Cys244 functions as the Glycyl thioester intermediate in the catalytic mechanism. Zn(2+) is bound by residues Cys297 and Cys302.

It belongs to the ubiquitin-activating E1 family. UBA5 subfamily.

Functionally, E1-like enzyme which activates UFM1. The chain is Ubiquitin-like modifier-activating enzyme 5 from Culex quinquefasciatus (Southern house mosquito).